The primary structure comprises 568 residues: MKRFALSLLAGLVALQASAATPDRLTIVNQYVDNVLTKAGDHYHGQSPTPLLADGVDPRTGKQMEWIFPDGRHAVLSNFSAQQNLMRVLVGLSNLSGNPSYKQRAEAIVKYHFQHYQDESGLLIWGGHRFVDLKTLQPEGPSEKEMVHELKNAYPYYDLMFSVDKDATARFIRGFWNAHVYDWKIMETSRHGKYGQKIGALWQSPFEQQPPFFATKGLSFLNAGNDLIYSASLLYKYNKEDGALVWAKRLAQQYVLPRDKATGLGVYQFTQALKRDETTDDADTHSKYGDRAQRQFGPEFGPTALEGNMMLKGRTSTIYSENALMQLQLGKDLGAEGKELLTWTTDGLKAFAKYAYNESDNTFRPMLANGKDLSNYVLPRDGYYGKKGTVIKPYPADNSFLLSYARAYTVLPDAELWRVARGIARAQGLGELGSAPGKDVKVDLATKNNDPYALFALLDLYQASKVKDYLSLAEKVGDNIISTRYQNGFFMAEPNRQYADVDTIEPYALLALEAAVRNQPQSVAPFLNGAGFTEGGYRMEDGSTRVSTRDNEIFLLNVGETLKPNNKK.

Positions 1 to 19 are cleaved as a signal peptide; sequence MKRFALSLLAGLVALQASA.

Belongs to the polysaccharide lyase 2 family.

It localises to the periplasm. It catalyses the reaction Eliminative cleavage of (1-&gt;4)-alpha-D-galacturonan to give oligosaccharides with 4-deoxy-alpha-D-galact-4-enuronosyl groups at their non-reducing ends.. It functions in the pathway glycan metabolism; pectin degradation; 2-dehydro-3-deoxy-D-gluconate from pectin: step 2/5. The sequence is that of Periplasmic pectate lyase (pelB) from Pectobacterium carotovorum subsp. carotovorum (Erwinia carotovora subsp. carotovora).